A 178-amino-acid polypeptide reads, in one-letter code: MTQLSSNDVPSMGRRQFMNLLTFGTATGVALGALYPVANYFMPLRAGGGGGGTSAKDELGNPITKTGWLATHQAGDRSLVQGLKGDPTYLIVNEGGEIGEFGLNAICTHLGCVVPWDSGANKFICPCHGSQYDTNGKVVRGPAPLSLALAHVDIEDDAVLVKQWSETDFRTNENPWWA.

A helical transmembrane segment spans residues 20–42 (LLTFGTATGVALGALYPVANYFM). One can recognise a Rieske domain in the interval 65–161 (KTGWLATHQA…VDIEDDAVLV (97 aa)). 4 residues coordinate [2Fe-2S] cluster: C107, H109, C125, and H128. C112 and C127 form a disulfide bridge.

The protein belongs to the Rieske iron-sulfur protein family. In terms of assembly, the 4 large subunits of the cytochrome b6-f complex are cytochrome b6, subunit IV (17 kDa polypeptide, PetD), cytochrome f and the Rieske protein, while the 4 small subunits are PetG, PetL, PetM and PetN. The complex functions as a dimer. Requires [2Fe-2S] cluster as cofactor.

The protein localises to the cellular thylakoid membrane. It catalyses the reaction 2 oxidized [plastocyanin] + a plastoquinol + 2 H(+)(in) = 2 reduced [plastocyanin] + a plastoquinone + 4 H(+)(out). Functionally, component of the cytochrome b6-f complex, which mediates electron transfer between photosystem II (PSII) and photosystem I (PSI), cyclic electron flow around PSI, and state transitions. This is Cytochrome b6-f complex iron-sulfur subunit from Prochlorococcus marinus (strain AS9601).